Reading from the N-terminus, the 68-residue chain is Urocalcin (68 aa).

Positions methionine 1–alanine 27 are cleaved as a signal peptide. The propeptide occupies serine 28–glutamine 35. Intrachain disulfides connect cysteine 38–cysteine 52, cysteine 45–cysteine 56, and cysteine 51–cysteine 67. Residues lysine 57 to arginine 59 form an essential for stimulation of [3H]ryanodine binding to RYR1 region.

It belongs to the scorpion calcin family. As to expression, expressed by the venom gland.

The protein resides in the secreted. In terms of biological role, this toxin only weakly stabilizes ryanodine receptor 1 (RyR1) opening in a long-lasting subconductance state (55% of the full conductance state obtained only at high concentrations (1 uM)). In addition, it has been shown to dose-dependently stimulate ryanodine binding to RyR1 with the lowest activity of all calcins (EC(50)=376 nM). It also augments the bell-shaped calcium-[3H]ryanodine binding curve that is maximal at about 10 uM calcium concentration. It binds a different site as ryanodine. It acts synergistically with caffeine. In contrast to other calcins, it does not trigger calcium release from sarcoplasmic vesicles even at high concentration (1 uM). In vivo, intracerebroventricular injection into mice induces neurotoxic symptoms, followed by death. This chain is Urocalcin, found in Urodacus yaschenkoi (Inland robust scorpion).